A 333-amino-acid chain; its full sequence is Beta-ketoacyl-[acyl-carrier-protein] synthase III (333 aa).

Active-site residues include cysteine 117 and histidine 257. The ACP-binding stretch occupies residues glutamine 258 to arginine 262. Asparagine 287 is an active-site residue.

It belongs to the thiolase-like superfamily. FabH family. As to quaternary structure, homodimer.

It localises to the cytoplasm. It carries out the reaction malonyl-[ACP] + acetyl-CoA + H(+) = 3-oxobutanoyl-[ACP] + CO2 + CoA. It participates in lipid metabolism; fatty acid biosynthesis. Its function is as follows. Catalyzes the condensation reaction of fatty acid synthesis by the addition to an acyl acceptor of two carbons from malonyl-ACP. Catalyzes the first condensation reaction which initiates fatty acid synthesis and may therefore play a role in governing the total rate of fatty acid production. Possesses both acetoacetyl-ACP synthase and acetyl transacylase activities. Its substrate specificity determines the biosynthesis of branched-chain and/or straight-chain of fatty acids. This chain is Beta-ketoacyl-[acyl-carrier-protein] synthase III, found in Azobacteroides pseudotrichonymphae genomovar. CFP2.